The primary structure comprises 453 residues: tRNA modification GTPase MnmE (453 aa).

Residues Arg-22, Glu-79, and Lys-119 each coordinate (6S)-5-formyl-5,6,7,8-tetrahydrofolate. Residues 215 to 376 (GMKVVIAGRP…LKQHLKSLMG (162 aa)) form the TrmE-type G domain. Asn-225 contributes to the K(+) binding site. Residues 225–230 (NAGKSS), 244–250 (TEIAGTT), 269–272 (DTAG), and 334–337 (NKAD) contribute to the GTP site. Ser-229 is a binding site for Mg(2+). K(+) is bound by residues Thr-244, Ile-246, and Thr-249. Thr-250 serves as a coordination point for Mg(2+). Lys-453 contacts (6S)-5-formyl-5,6,7,8-tetrahydrofolate.

Belongs to the TRAFAC class TrmE-Era-EngA-EngB-Septin-like GTPase superfamily. TrmE GTPase family. As to quaternary structure, homodimer. Heterotetramer of two MnmE and two MnmG subunits. The cofactor is K(+).

The protein resides in the cytoplasm. Exhibits a very high intrinsic GTPase hydrolysis rate. Involved in the addition of a carboxymethylaminomethyl (cmnm) group at the wobble position (U34) of certain tRNAs, forming tRNA-cmnm(5)s(2)U34. In Shewanella pealeana (strain ATCC 700345 / ANG-SQ1), this protein is tRNA modification GTPase MnmE.